A 470-amino-acid chain; its full sequence is UDP-glycosyltransferase 91A1 (470 aa).

Residues Ser-290, 350–352, 367–375, and 389–392 each bind UDP-alpha-D-glucose; these read VEQ, HPGWGTIIE, and VYDQ.

Belongs to the UDP-glycosyltransferase family.

This is UDP-glycosyltransferase 91A1 (UGT91A1) from Arabidopsis thaliana (Mouse-ear cress).